Consider the following 574-residue polypeptide: MVEDGAEELEDLVHFSVSELPSRGYGVMEEIRRQGKLCDVTLKIGDHKFSAHRIVLAASIPYFHAMFTNDMMECKQDEIVMQGMDPSALEALINFAYNGNLAIDQQNVQSLLMGASFLQLQSIKDACCTFLRERLHPKNCLGVRQFAETMMCAVLYDAANSFIHQHFVEVSMSEEFLALPLEDVLELVSRDELNVKSEEQVFEAALAWVRYDREQRGPYLPELLSNIRLPLCRPQFLSDRVQQDDLVRCCHKCRDLVDEAKDYHLMPERRPHLPAFRTRPRCCTSIAGLIYAVGGLNSAGDSLNVVEVFDPIANCWERCRPMTTARSRVGVAVVNGLLYAIGGYDGQLRLSTVEAYNPETDTWTRVGSMNSKRSAMGTVVLDGQIYVCGGYDGNSSLSSVETYSPETDKWTVVTSMSSNRSAAGVTVFEGRIYVSGGHDGLQIFSSVEHYNHHTATWHPAAGMLNKRCRHGAASLGSKMFVCGGYDGSGFLSIAEMYSSVADQWCLIVPMHTRRSRVSLVASCGRLYAVGGYDGQSNLSSVEMYDPETDCWTFMAPMACHEGGVGVGCIPLLTI.

Residues 66–105 (MFTNDMMECKQDEIVMQGMDPSALEALINFAYNGNLAIDQ) enclose the BTB domain. A BACK domain is found at 140 to 242 (CLGVRQFAET…RPQFLSDRVQ (103 aa)). Kelch repeat units follow at residues 289 to 336 (LIYA…VVNG), 337 to 383 (LLYA…VLDG), 384 to 430 (QIYV…VFEG), 432 to 477 (IYVS…SLGS), 479 to 524 (MFVC…ASCG), and 525 to 571 (RLYA…CIPL).

As to quaternary structure, interacts with AURKA. Interacts (via BTB domain) with CUL3. Interacts (via kelch repeats) with UNC119.

The protein operates within protein modification; protein ubiquitination. Substrate-specific adapter of a BCR (BTB-CUL3-RBX1) E3 ubiquitin-protein ligase complex required for mitotic progression and cytokinesis. The BCR(KLHL18) E3 ubiquitin ligase complex mediates the ubiquitination of AURKA leading to its activation at the centrosome which is required for initiating mitotic entry. Regulates light-and dark-dependent alpha-transducin localization changes in rod photoreceptors through UNC119 ubiquitination and degradation. Preferentially ubiquitinates the unphosphorylated form of UNC119 over the phosphorylated form. In the presence of UNC119, under dark-adapted conditions alpha-transducin mislocalizes from the outer segment to the inner part of rod photoreceptors which leads to decreased photoreceptor damage caused by light. The polypeptide is Kelch-like protein 18 (KLHL18) (Homo sapiens (Human)).